Here is a 254-residue protein sequence, read N- to C-terminus: Mannose-binding protein (254 aa).

A signal peptide spans 1 to 19 (MTLLQPFSALLLCLSLMMA). The interval 46 to 99 (NGLPGRDGRDGPKGEKGDPGEGLRGLQGLPGKAGPQGLKGEVGPQGEKGQKGER) is disordered. Positions 51–66 (RDGRDGPKGEKGDPGE) are enriched in basic and acidic residues. Residue P57 is modified to 4-hydroxyproline. 5-hydroxylysine is present on residues K58 and K61. K58 and K61 each carry an O-linked (Gal...) hydroxylysine glycan. P75 carries the 4-hydroxyproline modification. A 5-hydroxylysine mark is found at K93 and K96. The region spanning 140-250 (VGKKMFVSTG…LDCSNSNIFI (111 aa)) is the C-type lectin domain. 2 cysteine pairs are disulfide-bonded: C161–C252 and C229–C243.

In terms of assembly, oligomeric complex of 3 or more homotrimers.

It localises to the secreted. Calcium-dependent lectin involved in innate immune defense. Binds mannose, fucose and N-acetylglucosamine on different microorganisms and activates the lectin complement pathway. The sequence is that of Mannose-binding protein from Gallus gallus (Chicken).